A 584-amino-acid polypeptide reads, in one-letter code: Alpha-glucosidase MAL32 (584 aa).

The active-site Nucleophile is Asp-214. The Proton donor role is filled by Glu-276.

This sequence belongs to the glycosyl hydrolase 13 family.

The catalysed reaction is Hydrolysis of terminal, non-reducing (1-&gt;4)-linked alpha-D-glucose residues with release of alpha-D-glucose.. In Saccharomyces cerevisiae (strain ATCC 204508 / S288c) (Baker's yeast), this protein is Alpha-glucosidase MAL32 (MAL32).